Reading from the N-terminus, the 667-residue chain is Transketolase 2 (667 aa).

His25 provides a ligand contact to substrate. Thiamine diphosphate is bound by residues His65 and 113 to 115; that span reads GPL. Residue Asp154 participates in Mg(2+) binding. Thiamine diphosphate-binding residues include Gly155 and Asn184. Mg(2+)-binding residues include Asn184 and Ile186. His260 provides a ligand contact to substrate. His260 provides a ligand contact to thiamine diphosphate. N6-acetyllysine is present on Lys342. Substrate is bound by residues Arg357 and Ser384. Glu410 (proton donor) is an active-site residue. Phe436 serves as a coordination point for thiamine diphosphate. His460, Asp468, and Arg519 together coordinate substrate.

Belongs to the transketolase family. In terms of assembly, homodimer. The cofactor is Mg(2+). Ca(2+) serves as cofactor. It depends on Mn(2+) as a cofactor. Co(2+) is required as a cofactor. Requires thiamine diphosphate as cofactor.

It catalyses the reaction D-sedoheptulose 7-phosphate + D-glyceraldehyde 3-phosphate = aldehydo-D-ribose 5-phosphate + D-xylulose 5-phosphate. Functionally, catalyzes the reversible transfer of a two-carbon ketol group from sedoheptulose-7-phosphate to glyceraldehyde-3-phosphate, producing xylulose-5-phosphate and ribose-5-phosphate. Catalyzes the transfer of a two-carbon ketol group from a ketose donor to an aldose acceptor, via a covalent intermediate with the cofactor thiamine pyrophosphate. This is Transketolase 2 from Escherichia coli (strain K12).